The following is a 447-amino-acid chain: Probable glycine dehydrogenase (decarboxylating) subunit 1 (447 aa).

This sequence belongs to the GcvP family. N-terminal subunit subfamily. The glycine cleavage system is composed of four proteins: P, T, L and H. In this organism, the P 'protein' is a heterodimer of two subunits.

The enzyme catalyses N(6)-[(R)-lipoyl]-L-lysyl-[glycine-cleavage complex H protein] + glycine + H(+) = N(6)-[(R)-S(8)-aminomethyldihydrolipoyl]-L-lysyl-[glycine-cleavage complex H protein] + CO2. Its function is as follows. The glycine cleavage system catalyzes the degradation of glycine. The P protein binds the alpha-amino group of glycine through its pyridoxal phosphate cofactor; CO(2) is released and the remaining methylamine moiety is then transferred to the lipoamide cofactor of the H protein. This is Probable glycine dehydrogenase (decarboxylating) subunit 1 from Beijerinckia indica subsp. indica (strain ATCC 9039 / DSM 1715 / NCIMB 8712).